The chain runs to 427 residues: GTPase Obg (427 aa).

In terms of domain architecture, Obg spans 1 to 158; that stretch reads MFVDQVKIYV…RDVTLELKVL (158 aa). The region spanning 159-329 is the OBG-type G domain; the sequence is ADVGLVGFPS…LLFEVANLLE (171 aa). GTP-binding positions include 165–172, 190–194, 212–215, 282–285, and 310–312; these read GFPSVGKS, FTTIV, DLPG, NKMD, and SAV. 2 residues coordinate Mg(2+): Ser-172 and Thr-192. The 79-residue stretch at 349–427 folds into the OCT domain; the sequence is YKFESESNFE…ILEYQFEFID (79 aa).

It belongs to the TRAFAC class OBG-HflX-like GTPase superfamily. OBG GTPase family. As to quaternary structure, monomer. Requires Mg(2+) as cofactor.

It is found in the cytoplasm. An essential GTPase which binds GTP, GDP and possibly (p)ppGpp with moderate affinity, with high nucleotide exchange rates and a fairly low GTP hydrolysis rate. Plays a role in control of the cell cycle, stress response, ribosome biogenesis and in those bacteria that undergo differentiation, in morphogenesis control. The protein is GTPase Obg of Bacillus mycoides (strain KBAB4) (Bacillus weihenstephanensis).